The following is a 389-amino-acid chain: MHPVLRQMKPLPASVVKLEAESEGLARLQGGAAPEVHPRVQMKQEAAEAYIPASNVFRDNEGEEAEGLRHLKYESGRMLRKDHPSKRVLDERDFEKSPENGISAAEAHLKSADLVTAYEHTVKAEVNFQTTFNNNVRTLIAREEVVIGLMHLWDFVEAFLENPVSKALTAQLFLIVQHCRDEGVLRESLLNIAEPESRWLVDLLNLLQTIVVQERSLAVGEKVAAINYSVITLSKHYARKIFNSVFVPIDKEAKINTFYMRTVVQILVLSDDLGMYRNERIERAVSGARQRELNDRELMYRLREALTSNGLSEIEGGEDSARVRSKENWGAGAGVGAASARYPHLLDYEEKENPDGSVSFQQHERGTQSHENGGHAEPAYSRRQLGRFY.

The interaction with packaging protein 1 stretch occupies residues 1 to 131 (MHPVLRQMKP…VKAEVNFQTT (131 aa)). The disordered stretch occupies residues 350-389 (EKENPDGSVSFQQHERGTQSHENGGHAEPAYSRRQLGRFY). Residues 362 to 374 (QHERGTQSHENGG) are compositionally biased toward basic and acidic residues.

The protein belongs to the adenoviridae packaging protein 3 family. Part of the genome packaging complex composed of packaging proteins 1, 2 and 3; this complex specifically binds to the packaging sequence on the left end of viral genomic DNA and performs packaging of the viral genome. Interacts with hexon-linking protein IIIa; this interaction is required to promote correct genome packaging. In terms of processing, cleaved at different sites by the viral protease during virion maturation.

It is found in the host nucleus. Its function is as follows. Involved in viral genome packaging through its interaction with packaging proteins 1 and 2. After proteolytic cleavage by adenovirus protease, L1 52/55k protein is removed from the capsid during viral maturation. This is Packaging protein 3 from Canine adenovirus serotype 1 (strain CLL) (CAdV-1).